The following is a 388-amino-acid chain: Alpha-2A adrenergic receptor (388 aa).

The Extracellular segment spans residues 1 to 22; the sequence is MICGANATNGTNATKEYTLLVA. N-linked (GlcNAc...) asparagine glycosylation is found at Asn6, Asn9, and Asn12. The chain crosses the membrane as a helical span at residues 23-48; sequence LPLSIAVGLLILLIIFGNVLVIIAVF. The Cytoplasmic portion of the chain corresponds to 49-59; sequence TSRALRAPQNL. A helical transmembrane segment spans residues 60–85; sequence FLVSLASADILVATLVMPFSLANELM. At 86–95 the chain is on the extracellular side; it reads GMWTFGGVWC. An intrachain disulfide couples Cys95 to Cys169. Residues 96–118 traverse the membrane as a helical segment; the sequence is EIYLALDVLFCTASITHLCAISL. The Cytoplasmic portion of the chain corresponds to 119 to 138; the sequence is DRYWSITQAIEYNLKRTPQR. A helical membrane pass occupies residues 139–162; sequence IKRIIFIVWIIAAVISCPPLITMK. Over 163 to 173 the chain is Extracellular; sequence KSEGDICDINK. Residues 174–198 traverse the membrane as a helical segment; sequence EKWYIVSSCIGSFFLPCIIMVLVYI. Residues 199–311 lie on the Cytoplasmic side of the membrane; the sequence is RIYQIAKKRT…RQNREKRFTF (113 aa). The disordered stretch occupies residues 208–291; it reads TRAPPGDHRK…PGDGDKTEAC (84 aa). Basic and acidic residues predominate over residues 212–231; the sequence is PGDHRKNEVGKKENDPHEKL. The span at 266-275 shows a compositional bias: basic residues; it reads LKKKSSKGKT. The chain crosses the membrane as a helical span at residues 312–337; sequence VLAVVIGVFVICWFPFFFTYTFTAFC. Over 338-344 the chain is Extracellular; sequence DCCVPET. A helical transmembrane segment spans residues 345–368; that stretch reads LFKFFFWFGYCNSSLNPIIYTIFN. The Cytoplasmic segment spans residues 369–388; sequence NDFRRSFKKILCRRDKRRVV. Cys380 carries the S-palmitoyl cysteine lipid modification.

It belongs to the G-protein coupled receptor 1 family. Adrenergic receptor subfamily. ADRA2A sub-subfamily.

It localises to the cell membrane. Its function is as follows. Alpha-2 adrenergic receptors mediate the catecholamine-induced inhibition of adenylate cyclase through the action of G proteins. The order of potency for this receptor is dexmedetomidine &gt; oxymetazoline = epinephrine &gt; norepinephrine. The sequence is that of Alpha-2A adrenergic receptor from Danio rerio (Zebrafish).